The chain runs to 156 residues: MVSRTTTSIPINFRGVGVYKTFANKNLLYCNCNIVSMEKTDLLMMTFAIVNLADYMTTVKGIEMGFHELNEFVSSLNPASFLLLKIAIVATAFALLLYTRRLSFSLGRGIYIGLVAGLAISTAVLGICSVHNLLLLTGFPEVEFLVKVMTGVLALI.

3 consecutive transmembrane segments (helical) span residues 42–59 (LLMM…MTTV), 79–98 (ASFL…LLLY), and 105–127 (SLGR…VLGI).

It localises to the cell membrane. This is an uncharacterized protein from Archaeoglobus fulgidus (strain ATCC 49558 / DSM 4304 / JCM 9628 / NBRC 100126 / VC-16).